The primary structure comprises 136 residues: UPF0225 protein Pnap_0466 (136 aa).

The protein belongs to the UPF0225 family.

The sequence is that of UPF0225 protein Pnap_0466 from Polaromonas naphthalenivorans (strain CJ2).